The primary structure comprises 298 residues: DNA repair protein RecO (298 aa).

Belongs to the RecO family.

Functionally, involved in DNA repair and RecF pathway recombination. The protein is DNA repair protein RecO of Cupriavidus metallidurans (strain ATCC 43123 / DSM 2839 / NBRC 102507 / CH34) (Ralstonia metallidurans).